A 188-amino-acid polypeptide reads, in one-letter code: GTP cyclohydrolase 1 (188 aa).

Residues cysteine 75, histidine 78, and cysteine 146 each contribute to the Zn(2+) site.

This sequence belongs to the GTP cyclohydrolase I family. In terms of assembly, toroid-shaped homodecamer, composed of two pentamers of five dimers.

It carries out the reaction GTP + H2O = 7,8-dihydroneopterin 3'-triphosphate + formate + H(+). The protein operates within cofactor biosynthesis; 7,8-dihydroneopterin triphosphate biosynthesis; 7,8-dihydroneopterin triphosphate from GTP: step 1/1. The protein is GTP cyclohydrolase 1 of Hahella chejuensis (strain KCTC 2396).